Consider the following 175-residue polypeptide: MMLYIVFILSVIFVMGFVGFSSKPSPIYGGLGLIVSGGVGCGIVLNFGGSFLGLMVFLIYLGGMMVVFGYTTAMATEQYPEIWLSNKAVLGAFVTGLLMEFFMVYYVLKDKEVEVVFEFNGLGDWVIYDTGDSGFFSEEAMGIAALYSYGTWLVIVTGWSLLIGVVVIMEITRGN.

Helical transmembrane passes span 1–21, 25–45, 47–67, 88–108, and 149–169; these read MMLY…VGFS, SPIY…GIVL, FGGS…MMVV, AVLG…YYVL, and YGTW…VVIM.

Belongs to the complex I subunit 6 family. In terms of assembly, core subunit of respiratory chain NADH dehydrogenase (Complex I) which is composed of 45 different subunits.

The protein localises to the mitochondrion inner membrane. It carries out the reaction a ubiquinone + NADH + 5 H(+)(in) = a ubiquinol + NAD(+) + 4 H(+)(out). Core subunit of the mitochondrial membrane respiratory chain NADH dehydrogenase (Complex I) which catalyzes electron transfer from NADH through the respiratory chain, using ubiquinone as an electron acceptor. Essential for the catalytic activity and assembly of complex I. In Bos indicus (Zebu), this protein is NADH-ubiquinone oxidoreductase chain 6 (MT-ND6).